A 146-amino-acid polypeptide reads, in one-letter code: MMDINEIREYLPHRYPFLLVDRVTELDIENKNIRAYKNVSVNEPFFNGHFPQHPIMPGVLIIEAMAQAAGILAFKMLDSKPSDGTLYYFVGSDKLRFRQPVFPGDKLVLEATFLSSKRQIWKFECKATVDGKAVCSAEIICAERKL.

H49 is a catalytic residue.

The protein belongs to the thioester dehydratase family. FabZ subfamily.

It localises to the cytoplasm. The enzyme catalyses a (3R)-hydroxyacyl-[ACP] = a (2E)-enoyl-[ACP] + H2O. Functionally, involved in unsaturated fatty acids biosynthesis. Catalyzes the dehydration of short chain beta-hydroxyacyl-ACPs and long chain saturated and unsaturated beta-hydroxyacyl-ACPs. The chain is 3-hydroxyacyl-[acyl-carrier-protein] dehydratase FabZ from Pseudomonas syringae pv. tomato (strain ATCC BAA-871 / DC3000).